The primary structure comprises 459 residues: Ceramide glucosyltransferase 3 (459 aa).

Residues 77-97 (LIAIVGFVFVFCLYLIHIIAL) traverse the membrane as a helical segment. Asp-156 is a short sequence motif (D1). Residue Asp-208 is a short sequence motif, D2. Residue Asp-302 is a short sequence motif, D3. The active-site Proton acceptor is the Asp-302. The (Q/R)XXRW signature appears at 338 to 342 (RICRW). A run of 2 helical transmembrane segments spans residues 367-387 (LIMAFSLNHLVGLNIMPILIL) and 415-435 (FMLIWLLRELTAPFVFIKALL).

It belongs to the glycosyltransferase 2 family. Expressed in pharyngeal intestinal valve, intestinal rectal valve and hypodermis.

It is found in the membrane. The enzyme catalyses an N-acylsphing-4-enine + UDP-alpha-D-glucose = a beta-D-glucosyl-(1&lt;-&gt;1')-N-acylsphing-4-enine + UDP + H(+). It catalyses the reaction an N-acyl-15-methylhexadecasphing-4-enine + UDP-alpha-D-glucose = an N-acyl-1-beta-D-glucosyl-15-methylhexadecasphing-4-enine + UDP + H(+). It functions in the pathway lipid metabolism; sphingolipid metabolism. Functionally, catalyzes the first glycosylation step in glycosphingolipid biosynthesis, the transfer of glucose to ceramide to produce glucosylceramides (GlcCer). GlcCer are known to contribute to the physical properties and physiological functions of membranes and may regulate signal transduction. Seems to be the major active form in the nematode. Only branched-chain sphingoid bases like 15-methylhexadecasphing-4-enine are used for generating complex sphingolipids in Caenorhabditis elegans. Together with cgt-1, plays a role in the trafficking of proteins such as mig-14 to the cell membrane in intestinal cells. The polypeptide is Ceramide glucosyltransferase 3 (Caenorhabditis elegans).